An 874-amino-acid polypeptide reads, in one-letter code: Probable inorganic carbon transporter subunit DabA (874 aa).

Zn(2+)-binding residues include Cys398, Asp400, His580, and Cys595.

It belongs to the inorganic carbon transporter (TC 9.A.2) DabA family. As to quaternary structure, forms a complex with DabB. Zn(2+) serves as cofactor.

The protein localises to the cell membrane. Functionally, part of an energy-coupled inorganic carbon pump. This is Probable inorganic carbon transporter subunit DabA from Bacillus cytotoxicus (strain DSM 22905 / CIP 110041 / 391-98 / NVH 391-98).